Here is a 473-residue protein sequence, read N- to C-terminus: mRNA export factor ICP27 homolog (473 aa).

Disordered stretches follow at residues 57-81 (QELL…NSIY) and 123-143 (QTKR…NFPM). Residues cysteine 362, histidine 438, cysteine 442, and cysteine 447 each contribute to the Zn(2+) site. A CHC2-type zinc finger spans residues 362 to 447 (CKYGTEKRSM…HTRRCSDPAC (86 aa)).

It belongs to the HHV-1 ICP27 protein family. Associates in a complex with RNA, and host export factors NXF1/TAP and ALYREF; these interactions allow nuclear export of viral transcripts.

Its subcellular location is the host cytoplasm. It is found in the host nucleus. Functionally, multifunctional regulator of the expression of viral genes that mediates nuclear export of viral intronless mRNAs. This immediate early (EI) protein promotes the nuclear export of viral intronless mRNAs by interacting with mRNAs and host NXF1/TAP. This chain is mRNA export factor ICP27 homolog, found in Gallus gallus (Chicken).